Reading from the N-terminus, the 122-residue chain is Basic phospholipase A2 vipoxin B chain (122 aa).

Cystine bridges form between Cys26-Cys115, Cys28-Cys44, Cys43-Cys95, Cys49-Cys122, Cys50-Cys88, Cys57-Cys81, and Cys75-Cys86. 3 residues coordinate Ca(2+): Tyr27, Gly29, and Gly31. The active site involves His47. Residue Asp48 coordinates Ca(2+). The active site involves Asp89.

The protein belongs to the phospholipase A2 family. Group II subfamily. D49 sub-subfamily. In terms of assembly, heterodimer of A (AC P04084) and B chains; non-covalently linked. The A chain (acidic) is non-toxic, and increases the toxicity of the B chain (basic). The A chain may act as factor stabilizing the complex structure and hence retaining its toxicity by preventing non-specific binding. Upon binding to the target membranes the A chain is postulated to dissociate. Ca(2+) is required as a cofactor. As to expression, expressed by the venom gland.

The protein localises to the secreted. It catalyses the reaction a 1,2-diacyl-sn-glycero-3-phosphocholine + H2O = a 1-acyl-sn-glycero-3-phosphocholine + a fatty acid + H(+). Heterodimer: postsynaptic neurotoxin. Functionally, monomer: snake venom phospholipase A2 (PLA2) that shows hemolytic activity and inhibition of platelet aggregation. The hemolytic activity occurs only in presence of fatty acids (unsaturated fatty acids facilitate induce a strong hemolytic activity, whereas saturated fatty acids induce a slight activity). The inhibition of platelet aggregation is almost maximal when aggregation is induced by collagen, and arachidonic acid, whereas it is only of 30% when the aggregation is induced by ADP. PLA2 catalyzes the calcium-dependent hydrolysis of the 2-acyl groups in 3-sn-phosphoglycerides. The polypeptide is Basic phospholipase A2 vipoxin B chain (Vipera ammodytes meridionalis (Eastern sand viper)).